A 48-amino-acid polypeptide reads, in one-letter code: uncharacterized protein (48 aa).

This is an uncharacterized protein from Acidianus hospitalis (AFV-1).